A 166-amino-acid polypeptide reads, in one-letter code: UPF0304 protein VF_1794 (166 aa).

Belongs to the UPF0304 family.

The sequence is that of UPF0304 protein VF_1794 from Aliivibrio fischeri (strain ATCC 700601 / ES114) (Vibrio fischeri).